A 1605-amino-acid chain; its full sequence is GTPase-activating protein pac-1 (1605 aa).

Residues 1 to 574 (MEEHHRRLHV…QRFIALFNSS (574 aa)) form a required for localization to adherens junctions region. Disordered stretches follow at residues 293–430 (QRHP…ISTS), 529–556 (MRSG…LNAP), and 574–593 (SKTS…RSRT). Residues 323-334 (SKEDPSEDTGHD) are compositionally biased toward basic and acidic residues. 3 stretches are compositionally biased toward low complexity: residues 353–365 (RNAS…SSRS), 420–430 (TTSSTSSISTS), and 530–552 (RSGG…TSRS). Positions 599 to 726 (RFALPGTILQ…WISVLQSSSE (128 aa)) constitute a PH domain. Composition is skewed to polar residues over residues 728–745 (GIAT…TTGR) and 846–855 (KNSQLQSPTA). Disordered stretches follow at residues 728–752 (GIAT…NAVS) and 846–942 (KNSQ…AGAP). Positions 868–879 (SSSQTMATTSSS) are enriched in low complexity. Over residues 908–917 (SGRKWKKSKA) the composition is skewed to basic residues. Positions 928 to 941 (GSSSGSQQQGAAGA) are enriched in low complexity. Residues 948–1146 (VRIADCPTGS…TLIHYNLWMF (199 aa)) enclose the Rho-GAP domain. Disordered stretches follow at residues 1152–1176 (TEDA…YGVG), 1207–1258 (EGKG…AASV), 1277–1339 (SRQT…RRKR), 1438–1533 (TSDY…ARRH), and 1554–1605 (GIRK…DELL). The span at 1211–1229 (QKIKNMLRRNSRRDKSKSK) shows a compositional bias: basic residues. Polar residues-rich tracts occupy residues 1244–1257 (GWTQ…SAAS) and 1278–1300 (RQTV…RLDQ). Positions 1301–1312 (SPSLESSLGSLP) are enriched in low complexity. Polar residues predominate over residues 1438-1453 (TSDYSTTSSAPLSTNP). Residues 1461–1476 (DQPNSSSDYASSDPSP) show a composition bias toward low complexity. Composition is skewed to polar residues over residues 1480 to 1493 (NPST…SNLA) and 1500 to 1515 (HATS…MSRS). Positions 1558–1575 (SSPDVSRDEVSDDEKNHQ) are enriched in basic and acidic residues.

Associated with the catenin-cadherin complex consisting of hmr-1, hmp-1 and hmp-2; this is mediated by interaction with picc-1.

The protein resides in the cytoplasm. Its subcellular location is the cell junction. It localises to the adherens junction. GTPase-activating protein for members of the Rho subfamily including Rac1, RhoA and cdc42 and other Ras-related subfamilies including let-60. Mediates radial (inner-outer) polarity and gastrulation by excluding par-6 from contacted cell surfaces; acts by inactivating cdc42 at inner cell surfaces which limits active cdc42 to outer cell surfaces devoid of cell-cell contacts, where cdc42 can bind and recruit par-6. Required for blastomere polarization. This Caenorhabditis elegans protein is GTPase-activating protein pac-1 (pac-1).